The primary structure comprises 1268 residues: Vigilin (1268 aa).

Ser-2 carries the post-translational modification N-acetylserine. Phosphothreonine is present on Thr-8. Ser-11, Ser-31, and Ser-35 each carry phosphoserine. 7 KH domains span residues 150 to 212 (QASA…RHEV), 222 to 284 (RAVK…VARI), 295 to 357 (TTTI…LTEV), 364 to 424 (FTVS…QEQI), 435 to 497 (MDYV…KREL), 507 to 570 (ERTK…TKYM), and 581 to 643 (SYSI…RSRI). Residues Thr-295 and Thr-296 each carry the phosphothreonine modification. Residue Ser-317 is modified to Phosphoserine. At Tyr-437 the chain carries Phosphotyrosine. Residue Ser-645 is modified to Phosphoserine. 7 consecutive KH domains span residues 653 to 716 (IAEV…KKQL), 727 to 790 (SFTV…QKEL), 800 to 863 (VVED…KKRI), 873 to 967 (QVTL…KEAL), 972 to 1034 (PVTI…KAGL), 1052 to 1117 (SFKL…RDAI), and 1127 to 1190 (MVSE…IDHI). Residues 910–946 (PDREENPVHSVEPSIQENGDEAGEGREAKETDPGSPR) are disordered. Basic and acidic residues predominate over residues 932–946 (GEGREAKETDPGSPR). Lys-991 bears the N6-acetyllysine mark. A disordered region spans residues 1214-1268 (PAHEESKAPSKGFVVRDAPWTSNSSEKAPDMSSSEEIPTFGAQVAPKTLPWGPKR). A compositionally biased stretch (polar residues) spans 1233 to 1249 (WTSNSSEKAPDMSSSEE). Ser-1247 bears the Phosphoserine mark.

It is found in the cytoplasm. The protein localises to the nucleus. Appears to play a role in cell sterol metabolism. It may function to protect cells from over-accumulation of cholesterol. The chain is Vigilin (Hdlbp) from Rattus norvegicus (Rat).